Consider the following 92-residue polypeptide: DNA-binding protein HU 1 (92 aa).

Thr-4 carries the phosphothreonine modification.

This sequence belongs to the bacterial histone-like protein family. In terms of assembly, homodimer. (Microbial infection) Interacts with Bacillus phage SP01 Gp46; the interaction replaces dsDNA from the hbs-DNA complex.

It localises to the cytoplasm. The protein localises to the nucleoid. Histone-like DNA-binding protein which introduces negative supercoils in relaxed plasmid DNA in the presence of topoisomerase I. There are at least 20,000 monomers/cell. Capable of wrapping DNA to stabilize it, and thus to prevent its denaturation under extreme environmental conditions. Binds evenly across chromosome, does not display a preference for AT content. Binds ss- and dsDNA in a sequence non-specific manner; 8 nucleotides are sufficient to bind protein. The sequence is that of DNA-binding protein HU 1 from Bacillus subtilis (strain 168).